We begin with the raw amino-acid sequence, 428 residues long: L-rhamnose isomerase (428 aa).

Residues histidine 260, aspartate 292, and aspartate 294 each coordinate Mn(2+).

It belongs to the rhamnose isomerase family. The cofactor is Mn(2+).

It localises to the cytoplasm. It carries out the reaction L-rhamnopyranose = L-rhamnulose. The protein operates within carbohydrate degradation; L-rhamnose degradation; glycerone phosphate from L-rhamnose: step 1/3. In terms of biological role, catalyzes the interconversion of L-rhamnose and L-rhamnulose. The polypeptide is L-rhamnose isomerase (Enterococcus faecalis (strain ATCC 700802 / V583)).